We begin with the raw amino-acid sequence, 148 residues long: Hydrogenase expression/formation protein HoxO (148 aa).

Residues 128–148 (IPVLSPESGTPSCSPMETSES) are disordered. Residues 134–148 (ESGTPSCSPMETSES) show a composition bias toward polar residues.

The protein belongs to the HupG/HyaE family.

The sequence is that of Hydrogenase expression/formation protein HoxO (hoxO) from Azotobacter vinelandii.